Reading from the N-terminus, the 161-residue chain is Nucleotide-binding protein Bd0338 (161 aa).

It belongs to the YajQ family.

Nucleotide-binding protein. The chain is Nucleotide-binding protein Bd0338 from Bdellovibrio bacteriovorus (strain ATCC 15356 / DSM 50701 / NCIMB 9529 / HD100).